We begin with the raw amino-acid sequence, 420 residues long: Glucose-1-phosphate adenylyltransferase (420 aa).

Alpha-D-glucose 1-phosphate is bound by residues Y97, G162, 177-178, and S188; that span reads EK.

Belongs to the bacterial/plant glucose-1-phosphate adenylyltransferase family. As to quaternary structure, homotetramer.

The enzyme catalyses alpha-D-glucose 1-phosphate + ATP + H(+) = ADP-alpha-D-glucose + diphosphate. Its pathway is glycan biosynthesis; glycogen biosynthesis. In terms of biological role, involved in the biosynthesis of ADP-glucose, a building block required for the elongation reactions to produce glycogen. Catalyzes the reaction between ATP and alpha-D-glucose 1-phosphate (G1P) to produce pyrophosphate and ADP-Glc. In Pseudothermotoga lettingae (strain ATCC BAA-301 / DSM 14385 / NBRC 107922 / TMO) (Thermotoga lettingae), this protein is Glucose-1-phosphate adenylyltransferase.